The primary structure comprises 467 residues: 3-isopropylmalate dehydratase large subunit (467 aa).

Residues C348, C409, and C412 each contribute to the [4Fe-4S] cluster site.

This sequence belongs to the aconitase/IPM isomerase family. LeuC type 1 subfamily. As to quaternary structure, heterodimer of LeuC and LeuD. Requires [4Fe-4S] cluster as cofactor.

The enzyme catalyses (2R,3S)-3-isopropylmalate = (2S)-2-isopropylmalate. It functions in the pathway amino-acid biosynthesis; L-leucine biosynthesis; L-leucine from 3-methyl-2-oxobutanoate: step 2/4. Functionally, catalyzes the isomerization between 2-isopropylmalate and 3-isopropylmalate, via the formation of 2-isopropylmaleate. In Thiobacillus denitrificans (strain ATCC 25259 / T1), this protein is 3-isopropylmalate dehydratase large subunit.